Here is a 1014-residue protein sequence, read N- to C-terminus: Ephrin type-B receptor 6 (1014 aa).

The signal sequence occupies residues 1-32 (MATEGTTGSGSRVVAGMVCSLWLLVLGSSVLA). Residues 33–591 (LEEVLLDTTG…LPEKLSLVIG (559 aa)) are Extracellular-facing. The region spanning 34-232 (EEVLLDTTGE…FSYTCPSVLR (199 aa)) is the Eph LBD domain. Fibronectin type-III domains lie at 364-479 (PPSA…TSHE) and 480-575 (VPSA…TLPQ). Residue Asn473 is glycosylated (N-linked (GlcNAc...) asparagine). The chain crosses the membrane as a helical span at residues 592–612 (SILGALAFLLLAAITVLAVIF). Residues 613 to 1014 (QRKRRGTGYT…HLRQPGSVEV (402 aa)) are Cytoplasmic-facing. One can recognise a Protein kinase domain in the interval 663-912 (IKIEEVIGAG…QLVAAFDKMI (250 aa)). 669–677 (IGAGSFGEV) contributes to the ATP binding site. Residues 941-1005 (PCLDSPQAWL…LHNIQLLQQH (65 aa)) enclose the SAM domain. The PDZ-binding motif lies at 1012 to 1014 (VEV).

Belongs to the protein kinase superfamily. Tyr protein kinase family. Ephrin receptor subfamily. Interacts with CBL and EPHB1. Interacts with FYN; this interaction takes place in a ligand-independent manner. In terms of processing, ligand-binding increases phosphorylation on tyrosine residues. Phosphorylation on tyrosine residues is mediated by transphosphorylation by the catalytically active EPHB1 in a ligand-independent manner. Tyrosine phosphorylation of the receptor may act as a switch on the functional transition from cell adhesion/attraction to de-adhesion/repulsion. As to expression, high level in thymus, and brain. Very low levels of expression in kidney, lung, liver, bone marrow, skeletal muscle, spleen from 2 week old and adult mice, heart, testes and embryonic stem cells.

The protein localises to the cell membrane. Its subcellular location is the secreted. Kinase-defective receptor for members of the ephrin-B family. Binds to ephrin-B1 and ephrin-B2. Modulates cell adhesion and migration by exerting both positive and negative effects upon stimulation with ephrin-B2. Inhibits JNK activation, T-cell receptor-induced IL-2 secretion and CD25 expression upon stimulation with ephrin-B2. The protein is Ephrin type-B receptor 6 (Ephb6) of Mus musculus (Mouse).